We begin with the raw amino-acid sequence, 182 residues long: Ribosome-recycling factor (182 aa).

The protein belongs to the RRF family.

The protein localises to the cytoplasm. Its function is as follows. Responsible for the release of ribosomes from messenger RNA at the termination of protein biosynthesis. May increase the efficiency of translation by recycling ribosomes from one round of translation to another. In Synechocystis sp. (strain ATCC 27184 / PCC 6803 / Kazusa), this protein is Ribosome-recycling factor.